Here is a 339-residue protein sequence, read N- to C-terminus: tRNA (guanine-N(7)-)-methyltransferase (339 aa).

The segment at 1-20 (MTPPPAKRQKRNEYRKANTA) is disordered. Residues glycine 94 and 117-118 (EI) contribute to the S-adenosyl-L-methionine site. The segment at 141 to 186 (RSSAIPSESSPAAQQPQQHHQQQLQATETAADAASPSSPDATGETL) is disordered. The segment covering 142 to 181 (SSAIPSESSPAAQQPQQHHQQQLQATETAADAASPSSPDA) has biased composition (low complexity). S-adenosyl-L-methionine-binding positions include 202-203 (NT) and cysteine 222. Aspartate 225 is a catalytic residue. An S-adenosyl-L-methionine-binding site is contributed by 311–313 (TEE).

This sequence belongs to the class I-like SAM-binding methyltransferase superfamily. TrmB family. Forms a complex with trm82.

It localises to the nucleus. The catalysed reaction is guanosine(46) in tRNA + S-adenosyl-L-methionine = N(7)-methylguanosine(46) in tRNA + S-adenosyl-L-homocysteine. It participates in tRNA modification; N(7)-methylguanine-tRNA biosynthesis. Catalyzes the formation of N(7)-methylguanine at position 46 (m7G46) in tRNA. This is tRNA (guanine-N(7)-)-methyltransferase (trm8) from Aspergillus clavatus (strain ATCC 1007 / CBS 513.65 / DSM 816 / NCTC 3887 / NRRL 1 / QM 1276 / 107).